We begin with the raw amino-acid sequence, 205 residues long: Variable small protein 11 (205 aa).

Positions 1–18 (MRKRISAIIMTLFMVFMS) are cleaved as a signal peptide. A lipid anchor (N-palmitoyl cysteine) is attached at C19. C19 carries S-diacylglycerol cysteine lipidation.

The protein belongs to the variable small protein (Vsp) family.

It is found in the cell outer membrane. Functionally, the Vlp and Vsp proteins are antigenically distinct proteins, only one vlp or vsp gene is transcriptionally active at any one time. Switching between these genes is a mechanism of host immune response evasion. The sequence is that of Variable small protein 11 from Borrelia hermsii.